Here is a 121-residue protein sequence, read N- to C-terminus: Putative membrane protein insertion efficiency factor (121 aa).

The protein belongs to the UPF0161 family.

The protein localises to the cell inner membrane. Its function is as follows. Could be involved in insertion of integral membrane proteins into the membrane. This Rhodopseudomonas palustris (strain HaA2) protein is Putative membrane protein insertion efficiency factor.